A 520-amino-acid chain; its full sequence is 3-phosphoshikimate 1-carboxyvinyltransferase, chloroplastic (520 aa).

A chloroplast-targeting transit peptide spans 1-76; it reads MAQVSRICNG…KVMSSVSTAE (76 aa). Residues 20–39 are disordered; sequence LSKSSQRKSPLSVSLKTQQH. 3-phosphoshikimate contacts are provided by Lys99, Ser100, and Arg104. Lys99 contacts phosphoenolpyruvate. Residues Gly177 and Arg207 each coordinate phosphoenolpyruvate. The 3-phosphoshikimate site is built by Ser254, Ser255, Gln256, Ser282, Asp407, and Lys434. Gln256 provides a ligand contact to phosphoenolpyruvate. Asp407 (proton acceptor) is an active-site residue. Positions 438, 480, and 505 each coordinate phosphoenolpyruvate.

Belongs to the EPSP synthase family.

The protein localises to the plastid. The protein resides in the chloroplast. The enzyme catalyses 3-phosphoshikimate + phosphoenolpyruvate = 5-O-(1-carboxyvinyl)-3-phosphoshikimate + phosphate. It participates in metabolic intermediate biosynthesis; chorismate biosynthesis; chorismate from D-erythrose 4-phosphate and phosphoenolpyruvate: step 6/7. In terms of biological role, catalyzes the transfer of the enolpyruvyl moiety of phosphoenolpyruvate (PEP) to the 5-hydroxyl of shikimate-3-phosphate (S3P) to produce enolpyruvyl shikimate-3-phosphate and inorganic phosphate. This Arabidopsis thaliana (Mouse-ear cress) protein is 3-phosphoshikimate 1-carboxyvinyltransferase, chloroplastic.